Consider the following 371-residue polypeptide: Leu/Ile/Val-binding protein homolog 1 (371 aa).

Positions 1–23 are cleaved as a signal peptide; it reads MRKTLFSGVALAAVIAFGGSAWA.

This sequence belongs to the leucine-binding protein family.

In terms of biological role, component of an amino-acid transport system. The sequence is that of Leu/Ile/Val-binding protein homolog 1 from Brucella abortus (strain 2308).